The following is a 603-amino-acid chain: Palladin (603 aa).

The interval 63-67 (FPPPP) is interaction with VASP. S133 bears the Phosphoserine mark. Residues 134-156 (PPTPAALLSPTKEPPPLLAKPKL) are disordered. T136 carries the post-translational modification Phosphothreonine. Residues S142, S170, S256, and S261 each carry the phosphoserine modification. One can recognise an Ig-like C2-type 1 domain in the interval 278 to 362 (PFFEMKLKHY…MAANTQGRVS (85 aa)). Residues 373-402 (NQRGRSPRSPPGHPHARRPRSRSRDSGDEN) form a disordered region. S378, S381, and S393 each carry phosphoserine. A Phosphoserine; by PKB/AKT1 modification is found at S395. S398 is modified (phosphoserine). 2 Ig-like C2-type domains span residues 412–503 (PHFL…LVVA) and 511–601 (PVFI…ARLD). Interaction with EZR regions lie at residues 414–503 (FLQA…LVVA) and 513–603 (FIEK…LDVY). The cysteines at positions 433 and 485 are disulfide-linked.

Belongs to the myotilin/palladin family. In terms of assembly, interacts with EPS8. Interacts with LASP1. Interacts with VASP. Interacts with ACTN. Interacts with SORBS2. Interacts with PFN1. Interacts with LPP. Interacts with SPIN90. Interacts with SRC. Interacts with EZR. Interacts with RAI14. In terms of processing, phosphorylated predominantly on serines and, to a lesser extent, on tyrosines. Phosphorylation at Ser-395 by PKB/AKT1 modulates cytoskeletal organization and cell motility. As to expression, in adult central nervous system is detected in the brain and spinal cord, specially in the olfactory bulb, cerebral and cerebellar cortices, hippocampus, amygdala, superior colluculus, and superficial laminae of the spinal dorsal horn.

The protein localises to the cytoplasm. The protein resides in the cytoskeleton. Its subcellular location is the cell junction. It is found in the focal adhesion. It localises to the myofibril. The protein localises to the sarcomere. The protein resides in the z line. Its subcellular location is the cell projection. It is found in the ruffle. It localises to the podosome. The protein localises to the lamellipodium. The protein resides in the axon. Its subcellular location is the growth cone. Functionally, cytoskeletal protein required for organization of normal actin cytoskeleton. Roles in establishing cell morphology, motility, cell adhesion and cell-extracellular matrix interactions in a variety of cell types. May function as a scaffolding molecule with the potential to influence both actin polymerization and the assembly of existing actin filaments into higher-order arrays. Binds to proteins that bind to either monomeric or filamentous actin. Localizes at sites where active actin remodeling takes place, such as lamellipodia and membrane ruffles. Different isoforms may have functional differences. Plays a role in neurite outgrowth and in the establishment of polarity during neuronal morphogenesis. Participates in the acquisition of the reactive astrocyte morphology. This is Palladin (Palld) from Rattus norvegicus (Rat).